We begin with the raw amino-acid sequence, 407 residues long: Digeranylgeranylglycerophospholipid reductase (407 aa).

FAD is bound by residues alanine 15, glutamate 34, cysteine 45, alanine 46, glycine 48, arginine 99, alanine 123, aspartate 281, glycine 293, and isoleucine 294.

The protein belongs to the geranylgeranyl reductase family. DGGGPL reductase subfamily. The cofactor is FAD.

The catalysed reaction is a 2,3-bis-O-phytanyl-sn-glycerol 1-phospholipid + 8 oxidized 2[4Fe-4S]-[ferredoxin] = a 2,3-bis-O-(geranylgeranyl)-sn-glycerol 1-phospholipid + 8 reduced 2[4Fe-4S]-[ferredoxin] + 16 H(+). It carries out the reaction 2,3-bis-O-(phytanyl)-sn-glycerol 1-phosphate + 8 oxidized 2[4Fe-4S]-[ferredoxin] = 2,3-bis-O-(geranylgeranyl)-sn-glycerol 1-phosphate + 8 reduced 2[4Fe-4S]-[ferredoxin] + 16 H(+). It catalyses the reaction a 2,3-bis-O-phytanyl-sn-glycerol 1-phospholipid + 8 A = a 2,3-bis-O-(geranylgeranyl)-sn-glycerol 1-phospholipid + 8 AH2. The enzyme catalyses CDP-2,3-bis-O-(geranylgeranyl)-sn-glycerol + 8 AH2 = CDP-2,3-bis-O-(phytanyl)-sn-glycerol + 8 A. The catalysed reaction is archaetidylserine + 8 AH2 = 2,3-bis-O-phytanyl-sn-glycero-3-phospho-L-serine + 8 A. The protein operates within membrane lipid metabolism; glycerophospholipid metabolism. Its function is as follows. Is involved in the reduction of 2,3-digeranylgeranylglycerophospholipids (unsaturated archaeols) into 2,3-diphytanylglycerophospholipids (saturated archaeols) in the biosynthesis of archaeal membrane lipids. Catalyzes the formation of archaetidic acid (2,3-di-O-phytanyl-sn-glyceryl phosphate) from 2,3-di-O-geranylgeranylglyceryl phosphate (DGGGP) via the hydrogenation of each double bond of the isoprenoid chains. Is also probably able to reduce double bonds of geranyl groups in CDP-2,3-bis-O-(geranylgeranyl)-sn-glycerol and archaetidylserine, thus acting at various stages in the biosynthesis of archaeal membrane lipids. The sequence is that of Digeranylgeranylglycerophospholipid reductase from Methanosarcina mazei (strain ATCC BAA-159 / DSM 3647 / Goe1 / Go1 / JCM 11833 / OCM 88) (Methanosarcina frisia).